A 197-amino-acid chain; its full sequence is C-type lectin domain family 3 member A (197 aa).

The first 22 residues, 1-22 (MAKNGLVICILVITLLLDQTTS), serve as a signal peptide directing secretion. 3 disulfide bridges follow: cysteine 68/cysteine 78, cysteine 95/cysteine 191, and cysteine 167/cysteine 183. The C-type lectin domain occupies 74 to 192 (VHKKCYLASE…CRSSKRYICE (119 aa)).

As to expression, restricted to cartilage and breast. Also expressed in breast cancers.

It localises to the secreted. Its function is as follows. Promotes cell adhesion to laminin-332 and fibronectin. The polypeptide is C-type lectin domain family 3 member A (CLEC3A) (Homo sapiens (Human)).